Here is a 161-residue protein sequence, read N- to C-terminus: ATP synthase subunit b (161 aa).

Residues 11–31 form a helical membrane-spanning segment; sequence AISFVLFVWFCMKYIWPPIIL.

The protein belongs to the ATPase B chain family. In terms of assembly, F-type ATPases have 2 components, F(1) - the catalytic core - and F(0) - the membrane proton channel. F(1) has five subunits: alpha(3), beta(3), gamma(1), delta(1), epsilon(1). F(0) has three main subunits: a(1), b(2) and c(10-14). The alpha and beta chains form an alternating ring which encloses part of the gamma chain. F(1) is attached to F(0) by a central stalk formed by the gamma and epsilon chains, while a peripheral stalk is formed by the delta and b chains.

It is found in the cell membrane. Functionally, f(1)F(0) ATP synthase produces ATP from ADP in the presence of a proton or sodium gradient. F-type ATPases consist of two structural domains, F(1) containing the extramembraneous catalytic core and F(0) containing the membrane proton channel, linked together by a central stalk and a peripheral stalk. During catalysis, ATP synthesis in the catalytic domain of F(1) is coupled via a rotary mechanism of the central stalk subunits to proton translocation. Component of the F(0) channel, it forms part of the peripheral stalk, linking F(1) to F(0). The protein is ATP synthase subunit b of Buchnera aphidicola subsp. Acyrthosiphon pisum (strain APS) (Acyrthosiphon pisum symbiotic bacterium).